A 399-amino-acid polypeptide reads, in one-letter code: Enolase (399 aa).

Gln149 lines the (2R)-2-phosphoglycerate pocket. Residue Glu191 is the Proton donor of the active site. Residues Asp227, Glu268, and Asp293 each coordinate Mg(2+). Positions 318, 347, 348, and 369 each coordinate (2R)-2-phosphoglycerate. Catalysis depends on Lys318, which acts as the Proton acceptor.

This sequence belongs to the enolase family. Mg(2+) serves as cofactor.

The protein resides in the cytoplasm. It is found in the secreted. Its subcellular location is the cell surface. It catalyses the reaction (2R)-2-phosphoglycerate = phosphoenolpyruvate + H2O. It functions in the pathway carbohydrate degradation; glycolysis; pyruvate from D-glyceraldehyde 3-phosphate: step 4/5. Functionally, catalyzes the reversible conversion of 2-phosphoglycerate (2-PG) into phosphoenolpyruvate (PEP). It is essential for the degradation of carbohydrates via glycolysis. The chain is Enolase from Archaeoglobus fulgidus (strain ATCC 49558 / DSM 4304 / JCM 9628 / NBRC 100126 / VC-16).